Reading from the N-terminus, the 395-residue chain is RNA pseudouridine synthase 7 (395 aa).

The interval 1–21 (MKRKQQEDDNDDGVEKAVSPV) is disordered. One can recognise an S4 RNA-binding domain in the interval 74–136 (KTIVDLFADE…HEPPVMIDDV (63 aa)). Asp187 is a catalytic residue. Positions 244-255 (EGRSTAEDANSS) are enriched in polar residues. The disordered stretch occupies residues 244-263 (EGRSTAEDANSSGDDKKVKG).

It belongs to the pseudouridine synthase RluA family.

The enzyme catalyses a uridine in RNA = a pseudouridine in RNA. The sequence is that of RNA pseudouridine synthase 7 from Arabidopsis thaliana (Mouse-ear cress).